The primary structure comprises 354 residues: S-adenosylmethionine:tRNA ribosyltransferase-isomerase (354 aa).

The protein belongs to the QueA family. Monomer.

It localises to the cytoplasm. The enzyme catalyses 7-aminomethyl-7-carbaguanosine(34) in tRNA + S-adenosyl-L-methionine = epoxyqueuosine(34) in tRNA + adenine + L-methionine + 2 H(+). It functions in the pathway tRNA modification; tRNA-queuosine biosynthesis. In terms of biological role, transfers and isomerizes the ribose moiety from AdoMet to the 7-aminomethyl group of 7-deazaguanine (preQ1-tRNA) to give epoxyqueuosine (oQ-tRNA). The sequence is that of S-adenosylmethionine:tRNA ribosyltransferase-isomerase from Pseudomonas syringae pv. tomato (strain ATCC BAA-871 / DC3000).